The following is a 182-amino-acid chain: ATP synthase subunit delta (182 aa).

It belongs to the ATPase delta chain family. F-type ATPases have 2 components, F(1) - the catalytic core - and F(0) - the membrane proton channel. F(1) has five subunits: alpha(3), beta(3), gamma(1), delta(1), epsilon(1). CF(0) has four main subunits: a(1), b(1), b'(1) and c(10-14). The alpha and beta chains form an alternating ring which encloses part of the gamma chain. F(1) is attached to F(0) by a central stalk formed by the gamma and epsilon chains, while a peripheral stalk is formed by the delta, b and b' chains.

It localises to the cellular thylakoid membrane. In terms of biological role, f(1)F(0) ATP synthase produces ATP from ADP in the presence of a proton or sodium gradient. F-type ATPases consist of two structural domains, F(1) containing the extramembraneous catalytic core and F(0) containing the membrane proton channel, linked together by a central stalk and a peripheral stalk. During catalysis, ATP synthesis in the catalytic domain of F(1) is coupled via a rotary mechanism of the central stalk subunits to proton translocation. Functionally, this protein is part of the stalk that links CF(0) to CF(1). It either transmits conformational changes from CF(0) to CF(1) or is implicated in proton conduction. This chain is ATP synthase subunit delta, found in Prochlorococcus marinus (strain NATL2A).